We begin with the raw amino-acid sequence, 96 residues long: Ubiquitin-related modifier 1 (96 aa).

Residue glycine 96 is modified to 1-thioglycine. A Glycyl lysine isopeptide (Gly-Lys) (interchain with K-? in acceptor proteins) cross-link involves residue glycine 96.

Belongs to the URM1 family. C-terminal thiocarboxylation occurs in 2 steps, it is first acyl-adenylated (-COAMP) via the hesA/moeB/thiF part of UBA4, then thiocarboxylated (-COSH) via the rhodanese domain of UBA4.

It is found in the cytoplasm. The protein operates within tRNA modification; 5-methoxycarbonylmethyl-2-thiouridine-tRNA biosynthesis. Functionally, acts as a sulfur carrier required for 2-thiolation of mcm(5)S(2)U at tRNA wobble positions of cytosolic tRNA(Lys), tRNA(Glu) and tRNA(Gln). Serves as sulfur donor in tRNA 2-thiolation reaction by being thiocarboxylated (-COSH) at its C-terminus by the MOCS3 homolog UBA4. The sulfur is then transferred to tRNA to form 2-thiolation of mcm(5)S(2)U. Prior mcm(5) tRNA modification by the elongator complex is required for 2-thiolation. Also acts as a ubiquitin-like protein (UBL) that is covalently conjugated via an isopeptide bond to lysine residues of target proteins such as AHP1. The thiocarboxylated form serves as substrate for conjugation and oxidative stress specifically induces the formation of UBL-protein conjugates. The sequence is that of Ubiquitin-related modifier 1 from Encephalitozoon cuniculi (strain GB-M1) (Microsporidian parasite).